The primary structure comprises 141 residues: Putative antiholin (141 aa).

Transmembrane regions (helical) follow at residues 4-24 (LSLS…SLIY), 32-52 (FVAA…GVGV), and 94-114 (VVVV…TALI).

Interacts with holin; this interaction this interaction blocks the holin homomultimerization and delays the host cell lysis.

The protein localises to the host cell inner membrane. In terms of biological role, involved in lysis inhibition. Interacts with and inhibits the holin thereby delaying the host cell lysis timing. The chain is Putative antiholin (lysA) from Enterobacteriaceae (Bacteriophage P2).